Consider the following 1029-residue polypeptide: Tyrosine-protein kinase-like otk (1029 aa).

Positions 1–18 are cleaved as a signal peptide; that stretch reads MISIYGLVMALMMASVLA. Over 19–577 the chain is Extracellular; the sequence is SSSRFQRVPQ…GGDGFLVTRA (559 aa). Ig-like C2-type domains lie at 21–104, 105–195, 247–361, 364–459, and 464–554; these read SRFQ…REAS, PPAK…RVMS, PEDL…APIS, PGIL…VAIN, and PKFS…VQLV. N-linked (GlcNAc...) asparagine glycosylation occurs at asparagine 35. 4 disulfides stabilise this stretch: cysteine 42–cysteine 91, cysteine 133–cysteine 184, cysteine 272–cysteine 350, and cysteine 395–cysteine 443. Residues asparagine 332, asparagine 413, asparagine 425, asparagine 440, asparagine 453, asparagine 508, and asparagine 520 are each glycosylated (N-linked (GlcNAc...) asparagine). A disulfide bridge links cysteine 486 with cysteine 538. Residues 578 to 598 form a helical membrane-spanning segment; the sequence is VLITMTVALAYIVLVVGLMLW. Topologically, residues 599–1029 are cytoplasmic; the sequence is CRYRRQARKA…LSKAMQIAEK (431 aa). Disordered regions lie at residues 613–675 and 714–756; these read LSTK…KKSA and SPSD…KTSM. A compositionally biased stretch (polar residues) spans 651–669; it reads KSSGDAQKSDDTACSQQSR. Position 674 is a phosphoserine (serine 674). One can recognise a Protein kinase; inactive domain in the interval 688-1024; that stretch reads LSELIQIGRG…QLGAALSKAM (337 aa). The segment covering 716-727 has biased composition (basic and acidic residues); that stretch reads SDKDADTEKQHS.

This sequence belongs to the protein kinase superfamily. Tyr protein kinase family. Insulin receptor subfamily. Interacts with plexA; component of a receptor complex that mediates the repulsive signaling in response to Semaphorin ligands.

It is found in the cell membrane. Functionally, acts as a calcium-dependent, homophilic cell adhesion molecule that regulates neural recognition during the development of the nervous system. Component of the repulsive Plexin signaling response to regulate motor axon guidance at the embryonic stage. Also component of a receptor complex that is required in the adult visual system to innervate the lamina layer; specific targeting of R1-R6 axons. This chain is Tyrosine-protein kinase-like otk, found in Drosophila sechellia (Fruit fly).